We begin with the raw amino-acid sequence, 432 residues long: Alcohol acyltransferase 9 (432 aa).

Active-site proton acceptor residues include H156 and D379.

The protein belongs to the plant acyltransferase family.

It catalyses the reaction 2-(methylsulfanyl)acetyl-CoA + butan-1-ol = butyl 2-(methylsulfanyl)acetate + CoA. The enzyme catalyses ethanol + acetyl-CoA = ethyl acetate + CoA. It carries out the reaction butan-1-ol + acetyl-CoA = butyl acetate + CoA. The catalysed reaction is butan-1-ol + propanoyl-CoA = butyl propanoate + CoA. In terms of biological role, involved in the biosynthesis of volatile esters which confer kiwifruit flavor. Alcohol acyl transferase that can use a wide range of alcohols as substrate to produce esters. Exhibits acetyl-CoA:alcohol O-acyltransferase activity. The polypeptide is Alcohol acyltransferase 9 (Actinidia chinensis var. chinensis (Chinese soft-hair kiwi)).